Here is a 718-residue protein sequence, read N- to C-terminus: Catalase-peroxidase (718 aa).

The segment at residues 92 to 220 (WHAAGTYRTA…LASVMMGLIY (129 aa)) is a cross-link (tryptophyl-tyrosyl-methioninium (Trp-Tyr) (with M-246)). The Proton acceptor role is filled by histidine 93. Positions 220–246 (YVNPEGVDGHPDPLKTANDVRVTFERM) form a cross-link, tryptophyl-tyrosyl-methioninium (Tyr-Met) (with W-92). Residue histidine 261 coordinates heme b.

This sequence belongs to the peroxidase family. Peroxidase/catalase subfamily. Homodimer or homotetramer. The cofactor is heme b. Formation of the three residue Trp-Tyr-Met cross-link is important for the catalase, but not the peroxidase activity of the enzyme.

The catalysed reaction is H2O2 + AH2 = A + 2 H2O. It catalyses the reaction 2 H2O2 = O2 + 2 H2O. Its function is as follows. Bifunctional enzyme with both catalase and broad-spectrum peroxidase activity. This chain is Catalase-peroxidase, found in Shewanella halifaxensis (strain HAW-EB4).